A 617-amino-acid polypeptide reads, in one-letter code: Vacuolar protein sorting-associated protein 33B (617 aa).

N-acetylalanine is present on Ala2.

Belongs to the STXBP/unc-18/SEC1 family. Interacts with RAB11A and VIPAS39. Associates with adaptor protein complex 3 (AP-3), clathrin:AP-3 and clathrin:HGS complexes. In terms of processing, phosphorylated on tyrosine residues. As to expression, ubiquitous.

It localises to the late endosome membrane. The protein resides in the lysosome membrane. The protein localises to the early endosome. Its subcellular location is the cytoplasmic vesicle. It is found in the clathrin-coated vesicle. It localises to the recycling endosome. In terms of biological role, may play a role in vesicle-mediated protein trafficking to lysosomal compartments and in membrane docking/fusion reactions of late endosomes/lysosomes. Mediates phagolysosomal fusion in macrophages. Proposed to be involved in endosomal maturation implicating VIPAS39. In epithelial cells, the VPS33B:VIPAS39 complex may play a role in the apical recycling pathway and in the maintenance of the apical-basolateral polarity. Seems to be involved in the sorting of specific cargos from the trans-Golgi network to alpha-granule-destined multivesicular bodies (MVBs) promoting MVBs maturation in megakaryocytes. The protein is Vacuolar protein sorting-associated protein 33B (Vps33b) of Rattus norvegicus (Rat).